We begin with the raw amino-acid sequence, 241 residues long: Sugar fermentation stimulation protein homolog (241 aa).

The protein belongs to the SfsA family.

This is Sugar fermentation stimulation protein homolog from Halorhodospira halophila (strain DSM 244 / SL1) (Ectothiorhodospira halophila (strain DSM 244 / SL1)).